The chain runs to 146 residues: Lipoprotein signal peptidase (146 aa).

Transmembrane regions (helical) follow at residues 10–30, 54–74, and 80–100; these read GLFV…LGGF, FLEG…LLFL, and FFVA…SNIL. Residues aspartate 110 and aspartate 127 contribute to the active site. The chain crosses the membrane as a helical span at residues 118-138; sequence FEFAIFNFADVMIDVAVALFL.

The protein belongs to the peptidase A8 family.

The protein localises to the cell inner membrane. It catalyses the reaction Release of signal peptides from bacterial membrane prolipoproteins. Hydrolyzes -Xaa-Yaa-Zaa-|-(S,diacylglyceryl)Cys-, in which Xaa is hydrophobic (preferably Leu), and Yaa (Ala or Ser) and Zaa (Gly or Ala) have small, neutral side chains.. It participates in protein modification; lipoprotein biosynthesis (signal peptide cleavage). Its function is as follows. This protein specifically catalyzes the removal of signal peptides from prolipoproteins. In Wolinella succinogenes (strain ATCC 29543 / DSM 1740 / CCUG 13145 / JCM 31913 / LMG 7466 / NCTC 11488 / FDC 602W) (Vibrio succinogenes), this protein is Lipoprotein signal peptidase.